Here is a 338-residue protein sequence, read N- to C-terminus: Legumin B (338 aa).

The tract at residues 16–162 (SLNTKEDTAK…RQHSKGRKNG (147 aa)) is disordered. A compositionally biased stretch (basic and acidic residues) spans 18–44 (NTKEDTAKRLRSPQDERGQIVKVEDGL). Acidic residues-rich tracts occupy residues 82 to 92 (DEDEDEEEEEE) and 136 to 150 (EEEEELEKEEEEEEE). Residues 174-321 (ENIARPSRGD…AFGLRHSQVA (148 aa)) enclose the Cupin type-1 domain.

It belongs to the 11S seed storage protein (globulins) family. Hexamer; each subunit is composed of an acidic and a basic chain derived from a single precursor and linked by a disulfide bond.

Its function is as follows. This protein found in the seeds of many leguminous and non-leguminous plants is the source of sulfur-containing amino acids in seed meals. This chain is Legumin B (LEGB), found in Pisum sativum (Garden pea).